Consider the following 80-residue polypeptide: UPF0270 protein AHA_0994 (80 aa).

Belongs to the UPF0270 family.

The protein is UPF0270 protein AHA_0994 of Aeromonas hydrophila subsp. hydrophila (strain ATCC 7966 / DSM 30187 / BCRC 13018 / CCUG 14551 / JCM 1027 / KCTC 2358 / NCIMB 9240 / NCTC 8049).